A 1469-amino-acid polypeptide reads, in one-letter code: MAAGGGGGSSKASSSSASSAGALESSLDRKFQSVTNTMESIQGLSSWCIENKKHHSTIVYHWMKWLRRSTYPHRLNLFYLANDVIQNCKRKNAIIFRESFADVLPEAAALVKDPSVSKSIERIFKIWEDRNVYPEDMIVALREALMDRAASHNARLQKLQCFPGTTFKTQKQLKENLNKQPNKQWKKSQTSTNPKAALKSKIVAEFRSQALIEELLMYKRSEDQIELKEKQLSTMRVDVCSTETLKCLKDKTGGKKFSKEFEEASSKLEEFVNGLDKQVKNGPSLTEALENAGIFYEAQYKEVKVVANAYKTFANRVNNLKKKLDQLKSTLPDPEESPVPSPSMDAPSPTGSESPFQGMGGEEPQSPAMESDKSATPEPVTDNRDVEDMELSDVEDDGSKIIVEDRKEKPVEKPAVSTGVPTKSTESVSKASPCAPPSVPTTAAPPLPKPLSTALLSPSPTLVLPNLANVDLAKISSILSSLTSVMKNTGVSSASRPSPGIPTSPSNLSSGLKTPAPATTPSHNPLANILSKVEITPESILSALSKTQTQSAPALQGLSSLLQSVTANPVPASEVTSQSTTASPASTTGSAVKGRNLLSSTQSFIPKSFNYSPSSSTSEVSSTSASKASVGQSPVLPSTTFKLPSSSLGFTGTHNPSPAAPPTEVAVCQSSEVSKPKPESESTSPSLEMKIHNFLKGNPGFSGLNLNIPILSSLGSSAPSEGHASDFQRGPTSTSVDSIDGTPVRDERSGTPTQDEMMDKPTSSSVDTMSLLSKIISPGSSTPSSTRSPPPGRDESYPQELPNSVSTYRPFGLGSDSPYKQPSGGVERPSSLMDSSQEKLFPDTSFQEDEDYRDFEYSGPPPSAMMNLEKKPAKSILKSSKLSDATEYQPILSSYNHRAQEFGVKSAFPPSVRALLDSSENCDRLSSPPGLFGAFNIRGNEPGSERSPSPSKNDAFFTPDSNHSGLSQSTAGHLTLPQTQYPDSPHSVPHRSIFSSQSTLAAPAGHPPTSGVEKVLASTISTTSTIEFKNMLKNASRKPSDDKHFGQTPNKGTSSDGVSLSNLTQPSLPTTDQQQEEHYRIETRVSSSCLDLPDSTEEKGAPIETLGYHNAANRRMSGEPIKTVESIRVPGKGNRGHGREVSRVGWFDLSTPGSSFDNGPSSASELASLGGGGSGGLTGFKTTPYKERAPQFQESVTSFRSNSFNSTFEHHLPPSPLEHGAPFQREPVGPSSAPPAPPKDHGGIFSREAPTHLPSVDLSNPFTKEASLAHAGPPPPPGEHSGVPFPPPPPPPPPGELSSGGTGVPFATPAPPPPPVDHSGVVPFPTPPLPEHGVTGAVSVFPKDHSSLLQGTMAEHFGVLTGPRDLNGPGLNRSRESLSLPSHPLEHLGPALGGGGGGNTSSSGLPLSPAHRDAIGRSGMILRSPRPDFRPREAFLGRDPFHSLKRPRPPFVRGPPFFAPKRPFFPPRY.

N-acetylalanine is present on A2. The residue at position 16 (S16) is a Phosphoserine. In terms of domain architecture, CID spans 19 to 149 (SAGALESSLD…ALREALMDRA (131 aa)). Disordered stretches follow at residues 329-445 (STLP…TAAP) and 489-524 (TGVSSASRPSPGIPTSPSNLSSGLKTPAPATTPSHN). Basic and acidic residues predominate over residues 370-386 (ESDKSATPEPVTDNRDV). S374 carries the post-translational modification Phosphoserine. T376 carries the phosphothreonine modification. Residues 387–396 (EDMELSDVED) show a composition bias toward acidic residues. Position 392 is a phosphoserine (S392). The span at 397 to 412 (DGSKIIVEDRKEKPVE) shows a compositional bias: basic and acidic residues. The segment covering 419–430 (GVPTKSTESVSK) has biased composition (polar residues). Residues 434 to 445 (CAPPSVPTTAAP) show a composition bias toward pro residues. A phosphoserine mark is found at S492, S495, S498, and S504. T536 carries the post-translational modification Phosphothreonine. Positions 572–594 (ASEVTSQSTTASPASTTGSAVKG) are disordered. Over residues 576–591 (TSQSTTASPASTTGSA) the composition is skewed to low complexity. Phosphoserine is present on residues S583 and S612. The residue at position 617 (T617) is a Phosphothreonine. Position 633 is a phosphoserine (S633). The segment covering 647–656 (SLGFTGTHNP) has biased composition (polar residues). 7 disordered regions span residues 647–686 (SLGFTGTHNPSPAAPPTEVAVCQSSEVSKPKPESESTSPS), 716–867 (SSAP…AMMN), 919–1013 (SENC…SGVE), 1033–1140 (KNAS…HGRE), 1154–1183 (SSFDNGPSSASELASLGGGGSGGLTGFKTT), 1204–1328 (FNST…PTPP), and 1368–1414 (GPGL…HRDA). Residues S682, S684, S735, and S738 each carry the phosphoserine modification. The residue at position 742 (T742) is a Phosphothreonine. Residue S749 is modified to Phosphoserine. T751 carries the phosphothreonine modification. Polar residues predominate over residues 761–771 (PTSSSVDTMSL). Residues S777 and S781 each carry the phosphoserine modification. A compositionally biased stretch (low complexity) spans 777–787 (SPGSSTPSSTR). T782 is subject to Phosphothreonine. A phosphoserine mark is found at S788, S836, S845, S919, and S947. The segment covering 959-982 (PDSNHSGLSQSTAGHLTLPQTQYP) has biased composition (polar residues). Phosphoserine occurs at positions 984 and 995. The segment covering 1047 to 1073 (QTPNKGTSSDGVSLSNLTQPSLPTTDQ) has biased composition (polar residues). 2 positions are modified to phosphoserine: S1086 and S1117. A compositionally biased stretch (low complexity) spans 1159–1168 (GPSSASELAS). The span at 1169-1178 (LGGGGSGGLT) shows a compositional bias: gly residues. Residues 1272–1295 (GPPPPPGEHSGVPFPPPPPPPPPG) show a composition bias toward pro residues. R1375 is modified (asymmetric dimethylarginine). 2 stretches are compositionally biased toward low complexity: residues 1377–1390 (SLSLPSHPLEHLGP) and 1400–1409 (TSSSGLPLSP). An asymmetric dimethylarginine mark is found at R1432 and R1438.

Associates with the RNA polymerase II complex.

The chain is Regulation of nuclear pre-mRNA domain-containing protein 2 (Rprd2) from Mus musculus (Mouse).